The following is a 194-amino-acid chain: Ribonuclease HII (194 aa).

The RNase H type-2 domain maps to 3-193 (ILTAGVDEAG…VRNLLAQQAL (191 aa)). The a divalent metal cation site is built by D9, E10, and D101.

Belongs to the RNase HII family. Mn(2+) serves as cofactor. Mg(2+) is required as a cofactor.

The protein resides in the cytoplasm. The catalysed reaction is Endonucleolytic cleavage to 5'-phosphomonoester.. Its function is as follows. Endonuclease that specifically degrades the RNA of RNA-DNA hybrids. The polypeptide is Ribonuclease HII (Neisseria gonorrhoeae (strain ATCC 700825 / FA 1090)).